The primary structure comprises 108 residues: Translation initiation factor 1A (108 aa).

In terms of domain architecture, S1-like spans 11–85 (PSRDVPKPEE…NRCDILYKYG (75 aa)).

This sequence belongs to the eIF-1A family.

Seems to be required for maximal rate of protein biosynthesis. Enhances ribosome dissociation into subunits and stabilizes the binding of the initiator Met-tRNA(I) to 40 S ribosomal subunits. The protein is Translation initiation factor 1A (eIF1A) of Saccharolobus islandicus (strain Y.N.15.51 / Yellowstone #2) (Sulfolobus islandicus).